Consider the following 99-residue polypeptide: Aspartyl/glutamyl-tRNA(Asn/Gln) amidotransferase subunit C (99 aa).

Belongs to the GatC family. Heterotrimer of A, B and C subunits.

It catalyses the reaction L-glutamyl-tRNA(Gln) + L-glutamine + ATP + H2O = L-glutaminyl-tRNA(Gln) + L-glutamate + ADP + phosphate + H(+). It carries out the reaction L-aspartyl-tRNA(Asn) + L-glutamine + ATP + H2O = L-asparaginyl-tRNA(Asn) + L-glutamate + ADP + phosphate + 2 H(+). Allows the formation of correctly charged Asn-tRNA(Asn) or Gln-tRNA(Gln) through the transamidation of misacylated Asp-tRNA(Asn) or Glu-tRNA(Gln) in organisms which lack either or both of asparaginyl-tRNA or glutaminyl-tRNA synthetases. The reaction takes place in the presence of glutamine and ATP through an activated phospho-Asp-tRNA(Asn) or phospho-Glu-tRNA(Gln). The protein is Aspartyl/glutamyl-tRNA(Asn/Gln) amidotransferase subunit C of Burkholderia ambifaria (strain MC40-6).